Reading from the N-terminus, the 273-residue chain is Ribosomal RNA small subunit methyltransferase A (273 aa).

The S-adenosyl-L-methionine site is built by asparagine 18, leucine 20, glycine 45, glutamate 66, aspartate 91, and asparagine 113.

The protein belongs to the class I-like SAM-binding methyltransferase superfamily. rRNA adenine N(6)-methyltransferase family. RsmA subfamily.

It localises to the cytoplasm. The enzyme catalyses adenosine(1518)/adenosine(1519) in 16S rRNA + 4 S-adenosyl-L-methionine = N(6)-dimethyladenosine(1518)/N(6)-dimethyladenosine(1519) in 16S rRNA + 4 S-adenosyl-L-homocysteine + 4 H(+). In terms of biological role, specifically dimethylates two adjacent adenosines (A1518 and A1519) in the loop of a conserved hairpin near the 3'-end of 16S rRNA in the 30S particle. May play a critical role in biogenesis of 30S subunits. This is Ribosomal RNA small subunit methyltransferase A from Escherichia coli O157:H7.